Here is a 384-residue protein sequence, read N- to C-terminus: Probable peptidoglycan glycosyltransferase FtsW (384 aa).

Residues 1–19 (MAAVWRWFVPERPSFYDRG) lie on the Cytoplasmic side of the membrane. Residues 20-40 (LLALTFSLMGIGLMMVASASI) form a helical membrane-spanning segment. At 41 to 54 (KEGPGGDMFYFTKR) the chain is on the periplasmic side. Residues 55–75 (HLIFLFVCLGIGVGTLYLPLE) traverse the membrane as a helical segment. Residues 76–83 (RWREWSGR) are Cytoplasmic-facing. Residues 84–104 (LLVGALGLLFAVLAVGRTVNG) form a helical membrane-spanning segment. The Periplasmic portion of the chain corresponds to 105–110 (AKRWIG). The helical transmembrane segment at 111–131 (FGFFNIQPAELAKLALIVFIA) threads the bilayer. Residues 132-143 (SYLVRRSDEVRG) lie on the Cytoplasmic side of the membrane. The chain crosses the membrane as a helical span at residues 144 to 164 (NIAGFVKPLAVVFLLAIMLLA). The Periplasmic segment spans residues 165-166 (QP). Residues 167–187 (DLGSVVVLFVCTFGLLFIGGA) form a helical membrane-spanning segment. Position 188 (Lys-188) is a topological domain, cytoplasmic. Residues 189 to 209 (LVQFIAIIVAGLSALAGLIIY) form a helical membrane-spanning segment. The Periplasmic segment spans residues 210–267 (EPYRLRRVTSFLDPWADPFGSGYQLTQSLMAFGRGGFFGQGLGNSVQKLSYLPEAHTD). The chain crosses the membrane as a helical span at residues 268 to 288 (FVFAILGEELGYFGVLVVLFL). Residues 289-316 (QLLLAMKALQIGRTALLRSKFFEGYMAC) lie on the Cytoplasmic side of the membrane. The chain crosses the membrane as a helical span at residues 317–337 (GIGIWFSFQTVVNVGAAAGML). The Periplasmic segment spans residues 338–343 (PTKGLT). A helical membrane pass occupies residues 344–364 (LPLVSYGGSSLIAITMAVAIL). The Cytoplasmic portion of the chain corresponds to 365–384 (LRIDFERRLDTSHVIQREAA).

It belongs to the SEDS family. FtsW subfamily.

The protein localises to the cell inner membrane. It catalyses the reaction [GlcNAc-(1-&gt;4)-Mur2Ac(oyl-L-Ala-gamma-D-Glu-L-Lys-D-Ala-D-Ala)](n)-di-trans,octa-cis-undecaprenyl diphosphate + beta-D-GlcNAc-(1-&gt;4)-Mur2Ac(oyl-L-Ala-gamma-D-Glu-L-Lys-D-Ala-D-Ala)-di-trans,octa-cis-undecaprenyl diphosphate = [GlcNAc-(1-&gt;4)-Mur2Ac(oyl-L-Ala-gamma-D-Glu-L-Lys-D-Ala-D-Ala)](n+1)-di-trans,octa-cis-undecaprenyl diphosphate + di-trans,octa-cis-undecaprenyl diphosphate + H(+). It functions in the pathway cell wall biogenesis; peptidoglycan biosynthesis. Peptidoglycan polymerase that is essential for cell division. The chain is Probable peptidoglycan glycosyltransferase FtsW from Tolumonas auensis (strain DSM 9187 / NBRC 110442 / TA 4).